A 503-amino-acid polypeptide reads, in one-letter code: Probable cytosol aminopeptidase (503 aa).

Residues K270 and D275 each coordinate Mn(2+). Residue K282 is part of the active site. 3 residues coordinate Mn(2+): D293, D352, and E354. R356 is an active-site residue.

Belongs to the peptidase M17 family. Mn(2+) is required as a cofactor.

Its subcellular location is the cytoplasm. The catalysed reaction is Release of an N-terminal amino acid, Xaa-|-Yaa-, in which Xaa is preferably Leu, but may be other amino acids including Pro although not Arg or Lys, and Yaa may be Pro. Amino acid amides and methyl esters are also readily hydrolyzed, but rates on arylamides are exceedingly low.. It catalyses the reaction Release of an N-terminal amino acid, preferentially leucine, but not glutamic or aspartic acids.. Functionally, presumably involved in the processing and regular turnover of intracellular proteins. Catalyzes the removal of unsubstituted N-terminal amino acids from various peptides. The polypeptide is Probable cytosol aminopeptidase (Pectobacterium atrosepticum (strain SCRI 1043 / ATCC BAA-672) (Erwinia carotovora subsp. atroseptica)).